The chain runs to 1499 residues: Autophagy-related protein 2 (1499 aa).

Positions 211–221 are enriched in polar residues; that stretch reads EQSVPSYGSSS. The disordered stretch occupies residues 211-237; it reads EQSVPSYGSSSSDKEDDNTSDSEDPLS. Over residues 224 to 234 the composition is skewed to acidic residues; it reads KEDDNTSDSED.

This sequence belongs to the ATG2 family.

The protein localises to the preautophagosomal structure membrane. The protein resides in the endoplasmic reticulum membrane. It carries out the reaction a 1,2-diacyl-sn-glycero-3-phosphocholine(in) = a 1,2-diacyl-sn-glycero-3-phosphocholine(out). The enzyme catalyses a 1,2-diacyl-sn-glycero-3-phospho-L-serine(in) = a 1,2-diacyl-sn-glycero-3-phospho-L-serine(out). It catalyses the reaction a 1,2-diacyl-sn-glycero-3-phosphoethanolamine(in) = a 1,2-diacyl-sn-glycero-3-phosphoethanolamine(out). Functionally, lipid transfer protein required for autophagosome completion and peroxisome degradation. Tethers the edge of the isolation membrane (IM) to the endoplasmic reticulum (ER) and mediates direct lipid transfer from ER to IM for IM expansion. ATG2 binds to the ER exit site (ERES), which is the membrane source for autophagosome formation, using basic residues in its N-terminal region (NR) and to the expanding edge of the IM through its C-terminal region. The latter binding is assisted by an ATG18-PtdIns3P interaction. ATG2 then extracts phospholipids from the membrane source using its NR and transfers them to ATG9 to the IM through its predicted beta-sheet-rich structure for membrane expansion. The protein is Autophagy-related protein 2 of Kluyveromyces marxianus (strain DMKU3-1042 / BCC 29191 / NBRC 104275) (Yeast).